A 249-amino-acid polypeptide reads, in one-letter code: Probable septum site-determining protein MinC (249 aa).

The interval 115–144 (PTAVSPPPPPPPPPARAEPAPPAARPAPGR) is disordered. The segment covering 118–139 (VSPPPPPPPPPARAEPAPPAAR) has biased composition (pro residues).

It belongs to the MinC family. As to quaternary structure, interacts with MinD and FtsZ.

Its function is as follows. Cell division inhibitor that blocks the formation of polar Z ring septums. Rapidly oscillates between the poles of the cell to destabilize FtsZ filaments that have formed before they mature into polar Z rings. Prevents FtsZ polymerization. This is Probable septum site-determining protein MinC from Xanthomonas axonopodis pv. citri (strain 306).